A 401-amino-acid chain; its full sequence is Exodeoxyribonuclease 7 large subunit (401 aa).

The protein belongs to the XseA family. In terms of assembly, heterooligomer composed of large and small subunits.

Its subcellular location is the cytoplasm. It catalyses the reaction Exonucleolytic cleavage in either 5'- to 3'- or 3'- to 5'-direction to yield nucleoside 5'-phosphates.. In terms of biological role, bidirectionally degrades single-stranded DNA into large acid-insoluble oligonucleotides, which are then degraded further into small acid-soluble oligonucleotides. This Clostridium botulinum (strain Langeland / NCTC 10281 / Type F) protein is Exodeoxyribonuclease 7 large subunit.